Here is a 181-residue protein sequence, read N- to C-terminus: ATP synthase subunit delta (181 aa).

It belongs to the ATPase delta chain family. In terms of assembly, F-type ATPases have 2 components, F(1) - the catalytic core - and F(0) - the membrane proton channel. F(1) has five subunits: alpha(3), beta(3), gamma(1), delta(1), epsilon(1). F(0) has three main subunits: a(1), b(2) and c(10-14). The alpha and beta chains form an alternating ring which encloses part of the gamma chain. F(1) is attached to F(0) by a central stalk formed by the gamma and epsilon chains, while a peripheral stalk is formed by the delta and b chains.

Its subcellular location is the cell membrane. Its function is as follows. F(1)F(0) ATP synthase produces ATP from ADP in the presence of a proton or sodium gradient. F-type ATPases consist of two structural domains, F(1) containing the extramembraneous catalytic core and F(0) containing the membrane proton channel, linked together by a central stalk and a peripheral stalk. During catalysis, ATP synthesis in the catalytic domain of F(1) is coupled via a rotary mechanism of the central stalk subunits to proton translocation. In terms of biological role, this protein is part of the stalk that links CF(0) to CF(1). It either transmits conformational changes from CF(0) to CF(1) or is implicated in proton conduction. This chain is ATP synthase subunit delta, found in Lacticaseibacillus casei (strain BL23) (Lactobacillus casei).